The chain runs to 169 residues: Peptide deformylase (169 aa).

Cysteine 91 and histidine 133 together coordinate Fe cation. Glutamate 134 is an active-site residue. Residue histidine 137 coordinates Fe cation.

Belongs to the polypeptide deformylase family. It depends on Fe(2+) as a cofactor.

It catalyses the reaction N-terminal N-formyl-L-methionyl-[peptide] + H2O = N-terminal L-methionyl-[peptide] + formate. Functionally, removes the formyl group from the N-terminal Met of newly synthesized proteins. Requires at least a dipeptide for an efficient rate of reaction. N-terminal L-methionine is a prerequisite for activity but the enzyme has broad specificity at other positions. In Pectobacterium atrosepticum (strain SCRI 1043 / ATCC BAA-672) (Erwinia carotovora subsp. atroseptica), this protein is Peptide deformylase.